A 617-amino-acid polypeptide reads, in one-letter code: Kelch-like protein diablo (617 aa).

Residues methionine 1–histidine 55 form a disordered region. Gly residues predominate over residues threonine 10–serine 37. The 68-residue stretch at cysteine 73–glutamate 140 folds into the BTB domain. The BACK domain occupies cysteine 175–glycine 277. Kelch repeat units follow at residues valine 324–aspartate 370, leucine 372–glycine 418, phenylalanine 419–glycine 465, leucine 467–asparagine 512, isoleucine 514–glycine 559, and glutamine 560–alanine 606.

Its pathway is protein modification; protein ubiquitination. In terms of biological role, probable substrate-specific adapter of an E3 ubiquitin-protein ligase complex which mediates the ubiquitination and subsequent proteasomal degradation of target proteins. May have a role in synapse differentiation and growth. The polypeptide is Kelch-like protein diablo (Drosophila mojavensis (Fruit fly)).